A 155-amino-acid chain; its full sequence is Probable Brix domain-containing ribosomal biogenesis protein (155 aa).

Residues 1–155 (MLLTTSRKPS…LLIRDFRVGE (155 aa)) form the Brix domain.

Probably involved in the biogenesis of the ribosome. The sequence is that of Probable Brix domain-containing ribosomal biogenesis protein from Methanothermobacter thermautotrophicus (strain ATCC 29096 / DSM 1053 / JCM 10044 / NBRC 100330 / Delta H) (Methanobacterium thermoautotrophicum).